Consider the following 59-residue polypeptide: UPF0391 membrane protein LPC_1949 (59 aa).

The next 2 helical transmembrane spans lie at 5–25 and 30–50; these read ALIF…GIAV and IAKI…IMGL.

This sequence belongs to the UPF0391 family.

The protein resides in the cell membrane. The protein is UPF0391 membrane protein LPC_1949 of Legionella pneumophila (strain Corby).